The sequence spans 149 residues: MSQTLQAAYAAKRKARRFAVQGIYEWQMSHNPVHEIEARTRAENAMHKVDLNYYHELLTQVIAQHEDLDALLIPVLDREIDALDGVELATLRLGAYELRDHLEIPYRVVLDEAIELAKHFGGADSHKYINGVLDRLSSTLRSAEKQQAK.

This sequence belongs to the NusB family.

Its function is as follows. Involved in transcription antitermination. Required for transcription of ribosomal RNA (rRNA) genes. Binds specifically to the boxA antiterminator sequence of the ribosomal RNA (rrn) operons. The polypeptide is Transcription antitermination protein NusB (Acinetobacter baumannii (strain AB307-0294)).